The primary structure comprises 202 residues: dITP/XTP pyrophosphatase (202 aa).

11-16 (TNNANK) provides a ligand contact to substrate. The Proton acceptor role is filled by Asp73. Asp73 is a binding site for Mg(2+). Substrate-binding positions include Ser74, 155–158 (FGYD), Lys178, and 183–184 (HR).

The protein belongs to the HAM1 NTPase family. As to quaternary structure, homodimer. Requires Mg(2+) as cofactor.

It catalyses the reaction XTP + H2O = XMP + diphosphate + H(+). It carries out the reaction dITP + H2O = dIMP + diphosphate + H(+). The catalysed reaction is ITP + H2O = IMP + diphosphate + H(+). Functionally, pyrophosphatase that catalyzes the hydrolysis of nucleoside triphosphates to their monophosphate derivatives, with a high preference for the non-canonical purine nucleotides XTP (xanthosine triphosphate), dITP (deoxyinosine triphosphate) and ITP. Seems to function as a house-cleaning enzyme that removes non-canonical purine nucleotides from the nucleotide pool, thus preventing their incorporation into DNA/RNA and avoiding chromosomal lesions. In Lactiplantibacillus plantarum (strain ATCC BAA-793 / NCIMB 8826 / WCFS1) (Lactobacillus plantarum), this protein is dITP/XTP pyrophosphatase.